The primary structure comprises 366 residues: Aminomethyltransferase (366 aa).

Belongs to the GcvT family. In terms of assembly, the glycine cleavage system is composed of four proteins: P, T, L and H.

The catalysed reaction is N(6)-[(R)-S(8)-aminomethyldihydrolipoyl]-L-lysyl-[protein] + (6S)-5,6,7,8-tetrahydrofolate = N(6)-[(R)-dihydrolipoyl]-L-lysyl-[protein] + (6R)-5,10-methylene-5,6,7,8-tetrahydrofolate + NH4(+). Functionally, the glycine cleavage system catalyzes the degradation of glycine. The chain is Aminomethyltransferase from Chlorobium chlorochromatii (strain CaD3).